Here is a 480-residue protein sequence, read N- to C-terminus: GTPase Der (480 aa).

2 EngA-type G domains span residues 5–170 (PVVA…PSQE) and 178–351 (LKLA…QSSM). GTP-binding positions include 11–18 (GRPNVGKS), 58–62 (DTGGI), 123–126 (NKVD), 184–191 (GRPNVGKS), 231–235 (DTAGV), and 296–299 (NKWD). A KH-like domain is found at 352–436 (FEVSTNRLTQ…PLNVVFKLNE (85 aa)). The segment covering 438-454 (PYANKSDTPTKAKTQQL) has biased composition (polar residues). A disordered region spans residues 438–480 (PYANKSDTPTKAKTQQLRQRERNRAQKFTTKDKPRFTNKDKKR). Residues 455–480 (RQRERNRAQKFTTKDKPRFTNKDKKR) show a composition bias toward basic and acidic residues.

This sequence belongs to the TRAFAC class TrmE-Era-EngA-EngB-Septin-like GTPase superfamily. EngA (Der) GTPase family. As to quaternary structure, associates with the 50S ribosomal subunit.

In terms of biological role, GTPase that plays an essential role in the late steps of ribosome biogenesis. This is GTPase Der from Psychrobacter cryohalolentis (strain ATCC BAA-1226 / DSM 17306 / VKM B-2378 / K5).